A 515-amino-acid chain; its full sequence is 2-isopropylmalate synthase (515 aa).

One can recognise a Pyruvate carboxyltransferase domain in the interval 4–266; sequence ISVFDTTLRD…ETGLILKEIK (263 aa). Residues aspartate 13, histidine 201, histidine 203, and asparagine 237 each coordinate Mn(2+). Positions 391–515 are regulatory domain; that stretch reads ELQTLQVNYG…AEVYGSKVEV (125 aa).

This sequence belongs to the alpha-IPM synthase/homocitrate synthase family. LeuA type 1 subfamily. Homodimer. The cofactor is Mn(2+).

It is found in the cytoplasm. It catalyses the reaction 3-methyl-2-oxobutanoate + acetyl-CoA + H2O = (2S)-2-isopropylmalate + CoA + H(+). The protein operates within amino-acid biosynthesis; L-leucine biosynthesis; L-leucine from 3-methyl-2-oxobutanoate: step 1/4. Catalyzes the condensation of the acetyl group of acetyl-CoA with 3-methyl-2-oxobutanoate (2-ketoisovalerate) to form 3-carboxy-3-hydroxy-4-methylpentanoate (2-isopropylmalate). This chain is 2-isopropylmalate synthase, found in Halalkalibacterium halodurans (strain ATCC BAA-125 / DSM 18197 / FERM 7344 / JCM 9153 / C-125) (Bacillus halodurans).